The chain runs to 241 residues: Glucosamine-6-phosphate deaminase (241 aa).

The Proton acceptor; for enolization step role is filled by Asp67. Asn136 (for ring-opening step) is an active-site residue. His138 functions as the Proton acceptor; for ring-opening step in the catalytic mechanism. Catalysis depends on Glu143, which acts as the For ring-opening step.

It belongs to the glucosamine/galactosamine-6-phosphate isomerase family. NagB subfamily.

It carries out the reaction alpha-D-glucosamine 6-phosphate + H2O = beta-D-fructose 6-phosphate + NH4(+). The protein operates within amino-sugar metabolism; N-acetylneuraminate degradation; D-fructose 6-phosphate from N-acetylneuraminate: step 5/5. Functionally, catalyzes the reversible isomerization-deamination of glucosamine 6-phosphate (GlcN6P) to form fructose 6-phosphate (Fru6P) and ammonium ion. The sequence is that of Glucosamine-6-phosphate deaminase from Bacillus pumilus (strain SAFR-032).